The sequence spans 143 residues: Large ribosomal subunit protein uL11 (143 aa).

The protein belongs to the universal ribosomal protein uL11 family. In terms of assembly, part of the ribosomal stalk of the 50S ribosomal subunit. Interacts with L10 and the large rRNA to form the base of the stalk. L10 forms an elongated spine to which L12 dimers bind in a sequential fashion forming a multimeric L10(L12)X complex. In terms of processing, one or more lysine residues are methylated.

Forms part of the ribosomal stalk which helps the ribosome interact with GTP-bound translation factors. In Psychrobacter sp. (strain PRwf-1), this protein is Large ribosomal subunit protein uL11.